An 87-amino-acid chain; its full sequence is Small ribosomal subunit protein bS20 (87 aa).

Residues 1–20 (MANSAQARKRARTALKQRAH) form a disordered region. Residues 7-19 (ARKRARTALKQRA) are compositionally biased toward basic residues.

Belongs to the bacterial ribosomal protein bS20 family.

Its function is as follows. Binds directly to 16S ribosomal RNA. This Chromobacterium violaceum (strain ATCC 12472 / DSM 30191 / JCM 1249 / CCUG 213 / NBRC 12614 / NCIMB 9131 / NCTC 9757 / MK) protein is Small ribosomal subunit protein bS20.